Consider the following 650-residue polypeptide: Phosphatidylinositol-3,5-bisphosphate 3-phosphatase MTMR14 (650 aa).

A disordered region spans residues M1–L27. The residue at position 194 (K194) is an N6-acetyllysine. An N-linked (GlcNAc...) asparagine glycan is attached at N226. C330 functions as the Phosphocysteine intermediate in the catalytic mechanism. Residues G333, W334, D335, R336, and R382 each coordinate a 1,2-diacyl-sn-glycero-3-phospho-(1D-myo-inositol-3,5-bisphosphate). A 1,2-diacyl-sn-glycero-3-phospho-(1D-myo-inositol-3-phosphate) contacts are provided by G333, W334, D335, R336, and R382. A disordered region spans residues A476–G546. At S518 the chain carries Phosphoserine. N519 is a glycosylation site (N-linked (GlcNAc...) asparagine). A phosphoserine mark is found at S530, S580, and S624. R638 carries the post-translational modification Omega-N-methylarginine.

The protein belongs to the protein-tyrosine phosphatase family. Non-receptor class myotubularin subfamily. As to expression, expressed in various tissues, including heart, skeletal muscle, placenta, liver, lung, kidney and pancreas.

The protein localises to the cytoplasm. It carries out the reaction a 1,2-diacyl-sn-glycero-3-phospho-(1D-myo-inositol-3,5-bisphosphate) + H2O = a 1,2-diacyl-sn-glycero-3-phospho-(1D-myo-inositol-5-phosphate) + phosphate. The catalysed reaction is a 1,2-diacyl-sn-glycero-3-phospho-(1D-myo-inositol-3-phosphate) + H2O = a 1,2-diacyl-sn-glycero-3-phospho-(1D-myo-inositol) + phosphate. Functionally, lipid phosphatase that specifically dephosphorylates the D-3 position of phosphatidylinositol 3-phosphate and phosphatidylinositol 3,5-bisphosphate, generating phosphatidylinositol and phosphatidylinositol 5-phosphate. The protein is Phosphatidylinositol-3,5-bisphosphate 3-phosphatase MTMR14 of Homo sapiens (Human).